A 699-amino-acid chain; its full sequence is Auxin response factor 10 (699 aa).

Disordered stretches follow at residues 108 to 136 (AAEA…DANN), 505 to 533 (TDLT…DDTK), and 551 to 595 (KNGN…SWSL). Basic and acidic residues predominate over residues 110-119 (EARREEENSR). Over residues 125–135 (FAKTLTQSDAN) the composition is skewed to polar residues. The TF-B3 DNA-binding region spans 125-227 (FAKTLTQSDA…NIHVGLRRAK (103 aa)). Residues 570-593 (PNTSEGSDSGVTQGSPTKNTTPSW) are compositionally biased toward polar residues. The PB1 domain occupies 613 to 693 (PGQCKVFVES…RKLRILTDAG (81 aa)).

Belongs to the ARF family. Homodimers and heterodimers.

It localises to the nucleus. Its function is as follows. Auxin response factors (ARFs) are transcriptional factors that bind specifically to the DNA sequence 5'-TGTCTC-3' found in the auxin-responsive promoter elements (AuxREs). The protein is Auxin response factor 10 (ARF10) of Oryza sativa subsp. indica (Rice).